Reading from the N-terminus, the 142-residue chain is Hemoglobin subunit alpha (142 aa).

Residues 2-142 (VLSAADKNNV…VSTVLTSKYR (141 aa)) form the Globin domain. Ser4 bears the Phosphoserine mark. Lys8 and Lys12 each carry N6-succinyllysine. Position 17 is an N6-acetyllysine; alternate (Lys17). An N6-succinyllysine; alternate modification is found at Lys17. Residue Tyr25 is modified to Phosphotyrosine. Phosphoserine is present on Ser36. An N6-succinyllysine modification is found at Lys41. Residue Ser50 is modified to Phosphoserine. An O2-binding site is contributed by His59. Heme b is bound at residue His88. At Thr109 the chain carries Phosphothreonine. Phosphoserine occurs at positions 125 and 132. Residues Thr135 and Thr138 each carry the phosphothreonine modification. Ser139 is modified (phosphoserine).

The protein belongs to the globin family. As to quaternary structure, heterotetramer of two alpha chains and two beta chains. As to expression, red blood cells.

Functionally, involved in oxygen transport from the lung to the various peripheral tissues. Hemopressin acts as an antagonist peptide of the cannabinoid receptor CNR1. Hemopressin-binding efficiently blocks cannabinoid receptor CNR1 and subsequent signaling. The sequence is that of Hemoglobin subunit alpha (HBA) from Cavia porcellus (Guinea pig).